A 155-amino-acid polypeptide reads, in one-letter code: RING finger protein 122 (155 aa).

Residues 40–60 (VIFGTGIFVFMLSLIFCCYFI) form a helical membrane-spanning segment. The RING-type; atypical zinc finger occupies 93 to 134 (CAVCLEDFKGKDELGVLPCQHAFHRKCLVKWLEVRCVCPMCN).

As to expression, widely expressed in several tissues and cell lines.

The protein resides in the golgi apparatus. It is found in the endoplasmic reticulum. Its subcellular location is the membrane. Its function is as follows. May induce necrosis and apoptosis. May play a role in cell viability. The chain is RING finger protein 122 (RNF122) from Homo sapiens (Human).